The primary structure comprises 195 residues: Holliday junction branch migration complex subunit RuvA (195 aa).

The interval 1–64 is domain I; that stretch reads MIGRIAGLLL…EDAHLLFGFM (64 aa). Residues 65–140 are domain II; the sequence is TEPERVLFRQ…KISPAITLPE (76 aa). The tract at residues 140-144 is flexible linker; it reads ETGTA. Residues 145 to 195 form a domain III region; sequence MASSTDKDILNALSALGYNDREANWAVGQLSEGVTVSDGIMQSLRLLSKAK.

Belongs to the RuvA family. In terms of assembly, homotetramer. Forms an RuvA(8)-RuvB(12)-Holliday junction (HJ) complex. HJ DNA is sandwiched between 2 RuvA tetramers; dsDNA enters through RuvA and exits via RuvB. An RuvB hexamer assembles on each DNA strand where it exits the tetramer. Each RuvB hexamer is contacted by two RuvA subunits (via domain III) on 2 adjacent RuvB subunits; this complex drives branch migration. In the full resolvosome a probable DNA-RuvA(4)-RuvB(12)-RuvC(2) complex forms which resolves the HJ.

The protein localises to the cytoplasm. Functionally, the RuvA-RuvB-RuvC complex processes Holliday junction (HJ) DNA during genetic recombination and DNA repair, while the RuvA-RuvB complex plays an important role in the rescue of blocked DNA replication forks via replication fork reversal (RFR). RuvA specifically binds to HJ cruciform DNA, conferring on it an open structure. The RuvB hexamer acts as an ATP-dependent pump, pulling dsDNA into and through the RuvAB complex. HJ branch migration allows RuvC to scan DNA until it finds its consensus sequence, where it cleaves and resolves the cruciform DNA. In Nitrosomonas europaea (strain ATCC 19718 / CIP 103999 / KCTC 2705 / NBRC 14298), this protein is Holliday junction branch migration complex subunit RuvA.